The primary structure comprises 405 residues: Tryptophan synthase beta chain (405 aa).

An N6-(pyridoxal phosphate)lysine modification is found at Lys98.

This sequence belongs to the TrpB family. As to quaternary structure, tetramer of two alpha and two beta chains. The cofactor is pyridoxal 5'-phosphate.

It carries out the reaction (1S,2R)-1-C-(indol-3-yl)glycerol 3-phosphate + L-serine = D-glyceraldehyde 3-phosphate + L-tryptophan + H2O. It functions in the pathway amino-acid biosynthesis; L-tryptophan biosynthesis; L-tryptophan from chorismate: step 5/5. The beta subunit is responsible for the synthesis of L-tryptophan from indole and L-serine. This is Tryptophan synthase beta chain from Afipia carboxidovorans (strain ATCC 49405 / DSM 1227 / KCTC 32145 / OM5) (Oligotropha carboxidovorans).